The chain runs to 322 residues: Chromoplast-specific carotenoid-associated protein, chromoplastic (322 aa).

The N-terminal 58 residues, 1–58 (MAFVSQFNQLPCKTLALNPPQPQLTSKPSVFPIASIGATARAAAGKSLISVRPAFKVR), are a transit peptide targeting the chromoplast. A disordered region spans residues 67–88 (GEDKDEKYGDDSSVAVAEKEEE).

This sequence belongs to the PAP/fibrillin family. Expressed in corollas. Not detected in fruits, stems, leaves, and roots.

The protein resides in the plastid. The protein localises to the chromoplast. May be involved in carotenoid sequestration within chromoplasts. The sequence is that of Chromoplast-specific carotenoid-associated protein, chromoplastic (CHRC) from Cucumis sativus (Cucumber).